Here is a 386-residue protein sequence, read N- to C-terminus: MGEVQEGPKVEQEKKPAATVVPVETTDGKPKSGGGDSAAAAAPPVAAVVSAFVYKVDMHCEGCAKKIKRMVKHFDGVKDVTADTGGNKLLVVGKIDPVKLQEKLEEKTKRKVVLANPPPKVEGPVAAAVGEKKADGGDKEAAPPAPAPAAPKESVVPLKIRLHCEGCIQKIKKIILKIKGVETVAIDGAKDVVTVKGTIDVKELVPLLTKKLKRTVEPLVPAKKDDGAAENKKTEAAAPDAKKEAPSAGVNEAKKEGSDGGEKKKEVGDGGEKKKEGGDGGEKKKEAGDGGEKKKDGGGVPAPVAMVNKMDYYGYSAYPTAPMHWQEGHVYGQSYSMTGQNYPVGGQSYPGSGYNYASESYVPYAQPNVNAPGMFSDENPNGCSVM.

Positions 1-16 are enriched in basic and acidic residues; that stretch reads MGEVQEGPKVEQEKKP. A disordered region spans residues 1 to 40; sequence MGEVQEGPKVEQEKKPAATVVPVETTDGKPKSGGGDSAAA. One can recognise an HMA 1 domain in the interval 49–112; it reads VSAFVYKVDM…KLEEKTKRKV (64 aa). A metal cation contacts are provided by C60 and C63. Residues 129-153 form a disordered region; the sequence is VGEKKADGGDKEAAPPAPAPAAPKE. Residues 130–141 show a composition bias toward basic and acidic residues; it reads GEKKADGGDKEA. The 68-residue stretch at 153-220 folds into the HMA 2 domain; sequence ESVVPLKIRL…KLKRTVEPLV (68 aa). 2 residues coordinate a metal cation: C164 and C167. Basic and acidic residues-rich tracts occupy residues 223–245 and 252–297; these read KKDD…KKEA and EAKK…KKDG. A disordered region spans residues 223–301; the sequence is KKDDGAAENK…EKKKDGGGVP (79 aa). C383 carries the post-translational modification Cysteine methyl ester. C383 carries the S-farnesyl cysteine lipid modification. Positions 384 to 386 are cleaved as a propeptide — removed in mature form; that stretch reads SVM.

Belongs to the HIPP family. In terms of processing, efficiently farnesylated in vitro.

Heavy-metal-binding protein. Involved in disease resistance. This chain is Heavy metal-associated isoprenylated plant protein 5, found in Arabidopsis thaliana (Mouse-ear cress).